A 426-amino-acid chain; its full sequence is MFETAIAAITAREILDSRGRPTVEAEVELECGAIGLAQVPSGASTGSFEAHELRDGDAQRYGGKGVLKAVQNIQEQIKPHLLGSDALKQELIDRKMIGLDGSANKASLGANAILAVSLATAKAGAEALGLPLYRYLGGPLANLLPVPLMNVINGGAHADNNVDFQEFMIVPHGASSFREALRWGAEVFAALSKVLHDKGLLTGVGDEGGFAPNLPSNQAALDLLMTAIAKAGFKPGEEISLALDVAASEFYQDGQYSYDGAAHSPSELIDYLATLSEQYPIVSIEDGLQEDDWQHWQQLTSKIGHRVQLVGDDLFVTNPIRLDKGIKERAGNAILIKLNQIGSLTETLQTIDLATRNRYRSIISHRSGETEDTTIADLAVATRAGQIKTGSLCRSERVAKYNRLLRIEDELGAQAIYAGTIGMGPG.

Glutamine 165 contacts (2R)-2-phosphoglycerate. Glutamate 207 functions as the Proton donor in the catalytic mechanism. Mg(2+) contacts are provided by aspartate 244, glutamate 285, and aspartate 312. Residues lysine 337, arginine 366, serine 367, and lysine 388 each contribute to the (2R)-2-phosphoglycerate site. Residue lysine 337 is the Proton acceptor of the active site.

The protein belongs to the enolase family. The cofactor is Mg(2+).

The protein resides in the cytoplasm. It localises to the secreted. Its subcellular location is the cell surface. The catalysed reaction is (2R)-2-phosphoglycerate = phosphoenolpyruvate + H2O. It participates in carbohydrate degradation; glycolysis; pyruvate from D-glyceraldehyde 3-phosphate: step 4/5. In terms of biological role, catalyzes the reversible conversion of 2-phosphoglycerate (2-PG) into phosphoenolpyruvate (PEP). It is essential for the degradation of carbohydrates via glycolysis. In Cyanothece sp. (strain PCC 7425 / ATCC 29141), this protein is Enolase.